The following is a 308-amino-acid chain: 4-hydroxy-tetrahydrodipicolinate synthase (308 aa).

Threonine 56 lines the pyruvate pocket. Tyrosine 144 (proton donor/acceptor) is an active-site residue. The active-site Schiff-base intermediate with substrate is the lysine 172. Valine 212 contributes to the pyruvate binding site.

Belongs to the DapA family. In terms of assembly, homotetramer; dimer of dimers.

The protein resides in the cytoplasm. It catalyses the reaction L-aspartate 4-semialdehyde + pyruvate = (2S,4S)-4-hydroxy-2,3,4,5-tetrahydrodipicolinate + H2O + H(+). It participates in amino-acid biosynthesis; L-lysine biosynthesis via DAP pathway; (S)-tetrahydrodipicolinate from L-aspartate: step 3/4. Functionally, catalyzes the condensation of (S)-aspartate-beta-semialdehyde [(S)-ASA] and pyruvate to 4-hydroxy-tetrahydrodipicolinate (HTPA). This chain is 4-hydroxy-tetrahydrodipicolinate synthase, found in Kineococcus radiotolerans (strain ATCC BAA-149 / DSM 14245 / SRS30216).